The primary structure comprises 229 residues: Orotidine 5'-phosphate decarboxylase (229 aa).

Substrate contacts are provided by residues aspartate 9, lysine 31, 58–67 (DLKLFDIPNT), threonine 121, arginine 179, glutamine 188, glycine 208, and arginine 209. Lysine 60 functions as the Proton donor in the catalytic mechanism.

The protein belongs to the OMP decarboxylase family. Type 1 subfamily. In terms of assembly, homodimer.

It catalyses the reaction orotidine 5'-phosphate + H(+) = UMP + CO2. Its pathway is pyrimidine metabolism; UMP biosynthesis via de novo pathway; UMP from orotate: step 2/2. Catalyzes the decarboxylation of orotidine 5'-monophosphate (OMP) to uridine 5'-monophosphate (UMP). This chain is Orotidine 5'-phosphate decarboxylase, found in Lawsonia intracellularis (strain PHE/MN1-00).